The following is a 251-amino-acid chain: Probable transcriptional regulatory protein NFA_37020 (251 aa).

The protein belongs to the TACO1 family.

It localises to the cytoplasm. This chain is Probable transcriptional regulatory protein NFA_37020, found in Nocardia farcinica (strain IFM 10152).